Here is a 127-residue protein sequence, read N- to C-terminus: Protein translocase subunit SecE (127 aa).

Helical transmembrane passes span 16–36 (IAKW…NHYY), 42–62 (IFQN…IFLT), and 98–118 (IIVT…LIWF).

The protein belongs to the SecE/SEC61-gamma family. Component of the Sec protein translocase complex. Heterotrimer consisting of SecY, SecE and SecG subunits. The heterotrimers can form oligomers, although 1 heterotrimer is thought to be able to translocate proteins. Interacts with the ribosome. Interacts with SecDF, and other proteins may be involved. Interacts with SecA.

It is found in the cell membrane. Its function is as follows. Essential subunit of the Sec protein translocation channel SecYEG. Clamps together the 2 halves of SecY. May contact the channel plug during translocation. The chain is Protein translocase subunit SecE from Buchnera aphidicola subsp. Baizongia pistaciae (strain Bp).